Reading from the N-terminus, the 559-residue chain is Intestinal-type alkaline phosphatase (559 aa).

The first 19 residues, 1–19 (MQGPWVLLLLGLRLQLSLS), serve as a signal peptide directing secretion. Asp-61 contributes to the Mg(2+) binding site. Positions 61 and 111 each coordinate Zn(2+). Ser-111 functions as the Phosphoserine intermediate in the catalytic mechanism. Cys-140 and Cys-202 are oxidised to a cystine. An N-linked (GlcNAc...) asparagine glycan is attached at Asn-141. Ser-174 lines the Mg(2+) pocket. Glu-235 serves as a coordination point for Ca(2+). N-linked (GlcNAc...) asparagine glycosylation occurs at Asn-241. Ca(2+) contacts are provided by Phe-288, Glu-289, and Asp-304. A Mg(2+)-binding site is contributed by Glu-330. Residues Asp-335, His-339, Asp-376, and His-377 each coordinate Zn(2+). N-linked (GlcNAc...) asparagine glycosylation occurs at Asn-426. His-450 is a Zn(2+) binding site. A disulfide bridge connects residues Cys-485 and Cys-492. A disordered region spans residues 496–531 (PPADESQTTTTTRQTTITTTTTTTTTTTTPVHNSAR). Residues 503-524 (TTTTTRQTTITTTTTTTTTTTT) show a composition bias toward low complexity. A lipid anchor (GPI-anchor amidated asparagine) is attached at Asn-528. Positions 529–559 (SARSLGPATAPLALALLAGMLMLLLGAPAES) are cleaved as a propeptide — removed in mature form.

This sequence belongs to the alkaline phosphatase family. In terms of assembly, homodimer. The cofactor is Mg(2+). It depends on Zn(2+) as a cofactor. Ca(2+) serves as cofactor. Intestine and thymus.

The protein resides in the cell membrane. The enzyme catalyses a phosphate monoester + H2O = an alcohol + phosphate. In terms of biological role, alkaline phosphatase that can hydrolyze various phosphate compounds. This Mus musculus (Mouse) protein is Intestinal-type alkaline phosphatase (Iap).